The primary structure comprises 267 residues: Malonyl-[acyl-carrier protein] O-methyltransferase (267 aa).

This sequence belongs to the methyltransferase superfamily.

It carries out the reaction malonyl-[ACP] + S-adenosyl-L-methionine = malonyl-[ACP] methyl ester + S-adenosyl-L-homocysteine. It functions in the pathway cofactor biosynthesis; biotin biosynthesis. Functionally, converts the free carboxyl group of a malonyl-thioester to its methyl ester by transfer of a methyl group from S-adenosyl-L-methionine (SAM). It allows to synthesize pimeloyl-ACP via the fatty acid synthetic pathway. In Yersinia pestis, this protein is Malonyl-[acyl-carrier protein] O-methyltransferase.